Consider the following 338-residue polypeptide: Anthranilate phosphoribosyltransferase (338 aa).

5-phospho-alpha-D-ribose 1-diphosphate-binding positions include G81, 84-85 (GD), T89, 91-94 (NIST), 109-117 (KHGNRAVSS), and S121. G81 is an anthranilate binding site. Mg(2+) is bound at residue S93. N112 contacts anthranilate. R167 serves as a coordination point for anthranilate. Mg(2+) is bound by residues D226 and E227.

This sequence belongs to the anthranilate phosphoribosyltransferase family. As to quaternary structure, homodimer. The cofactor is Mg(2+).

The catalysed reaction is N-(5-phospho-beta-D-ribosyl)anthranilate + diphosphate = 5-phospho-alpha-D-ribose 1-diphosphate + anthranilate. Its pathway is amino-acid biosynthesis; L-tryptophan biosynthesis; L-tryptophan from chorismate: step 2/5. In terms of biological role, catalyzes the transfer of the phosphoribosyl group of 5-phosphorylribose-1-pyrophosphate (PRPP) to anthranilate to yield N-(5'-phosphoribosyl)-anthranilate (PRA). This Myxococcus xanthus (strain DK1622) protein is Anthranilate phosphoribosyltransferase.